The chain runs to 404 residues: Acetate kinase (404 aa).

Residue N7 participates in Mg(2+) binding. K14 is an ATP binding site. Residue R91 participates in substrate binding. The active-site Proton donor/acceptor is D148. Residues 208–212 and 283–285 each bind ATP; these read HLGNG and DLR. Position 388 (E388) interacts with Mg(2+).

This sequence belongs to the acetokinase family. Homodimer. Mg(2+) is required as a cofactor. Mn(2+) serves as cofactor.

Its subcellular location is the cytoplasm. The catalysed reaction is acetate + ATP = acetyl phosphate + ADP. It participates in metabolic intermediate biosynthesis; acetyl-CoA biosynthesis; acetyl-CoA from acetate: step 1/2. In terms of biological role, catalyzes the formation of acetyl phosphate from acetate and ATP. Can also catalyze the reverse reaction. The sequence is that of Acetate kinase from Borrelia turicatae (strain 91E135).